Reading from the N-terminus, the 224-residue chain is 7-cyano-7-deazaguanine synthase (224 aa).

8-18 (LSGGMDSAAVI) serves as a coordination point for ATP. The Zn(2+) site is built by Cys186, Cys196, Cys199, and Cys202.

This sequence belongs to the QueC family. Zn(2+) serves as cofactor.

It catalyses the reaction 7-carboxy-7-deazaguanine + NH4(+) + ATP = 7-cyano-7-deazaguanine + ADP + phosphate + H2O + H(+). The protein operates within purine metabolism; 7-cyano-7-deazaguanine biosynthesis. Its function is as follows. Catalyzes the ATP-dependent conversion of 7-carboxy-7-deazaguanine (CDG) to 7-cyano-7-deazaguanine (preQ(0)). The sequence is that of 7-cyano-7-deazaguanine synthase from Xanthomonas oryzae pv. oryzae (strain MAFF 311018).